Reading from the N-terminus, the 485-residue chain is Glutamate--tRNA ligase (485 aa).

The short motif at 11 to 21 (PSPTGLLHIGN) is the 'HIGH' region element. The 'KMSKS' region motif lies at 255 to 259 (KLSKR). K258 is a binding site for ATP.

Belongs to the class-I aminoacyl-tRNA synthetase family. Glutamate--tRNA ligase type 1 subfamily. Monomer.

It is found in the cytoplasm. It catalyses the reaction tRNA(Glu) + L-glutamate + ATP = L-glutamyl-tRNA(Glu) + AMP + diphosphate. Functionally, catalyzes the attachment of glutamate to tRNA(Glu) in a two-step reaction: glutamate is first activated by ATP to form Glu-AMP and then transferred to the acceptor end of tRNA(Glu). The polypeptide is Glutamate--tRNA ligase (Streptococcus gordonii (strain Challis / ATCC 35105 / BCRC 15272 / CH1 / DL1 / V288)).